We begin with the raw amino-acid sequence, 75 residues long: Small ribosomal subunit protein eS28 (75 aa).

It belongs to the eukaryotic ribosomal protein eS28 family.

This is Small ribosomal subunit protein eS28 from Methanococcus aeolicus (strain ATCC BAA-1280 / DSM 17508 / OCM 812 / Nankai-3).